The primary structure comprises 695 residues: Elongation factor G (695 aa).

Residues 10–285 form the tr-type G domain; sequence DKTRNIGIMA…GVVDYLPSPL (276 aa). Residues 19-26, 83-87, and 137-140 contribute to the GTP site; these read AHIDAGKT, DTPGH, and NKMD.

Belongs to the TRAFAC class translation factor GTPase superfamily. Classic translation factor GTPase family. EF-G/EF-2 subfamily.

It is found in the cytoplasm. Functionally, catalyzes the GTP-dependent ribosomal translocation step during translation elongation. During this step, the ribosome changes from the pre-translocational (PRE) to the post-translocational (POST) state as the newly formed A-site-bound peptidyl-tRNA and P-site-bound deacylated tRNA move to the P and E sites, respectively. Catalyzes the coordinated movement of the two tRNA molecules, the mRNA and conformational changes in the ribosome. The polypeptide is Elongation factor G (Latilactobacillus sakei subsp. sakei (strain 23K) (Lactobacillus sakei subsp. sakei)).